Consider the following 570-residue polypeptide: Adenine deaminase (570 aa).

Belongs to the metallo-dependent hydrolases superfamily. Adenine deaminase family. Mn(2+) serves as cofactor.

It carries out the reaction adenine + H2O + H(+) = hypoxanthine + NH4(+). The chain is Adenine deaminase from Petrotoga mobilis (strain DSM 10674 / SJ95).